The primary structure comprises 393 residues: Formate-dependent phosphoribosylglycinamide formyltransferase (393 aa).

Residues 22-23 and glutamate 82 contribute to the N(1)-(5-phospho-beta-D-ribosyl)glycinamide site; that span reads EL. ATP contacts are provided by residues arginine 114, lysine 155, 160 to 165, 195 to 198, and glutamate 203; these read SSGKGQ and EGFI. An ATP-grasp domain is found at 119–308; the sequence is RLAAEELDLP…QFALHARAIL (190 aa). Mg(2+) is bound by residues glutamate 267 and glutamate 279. N(1)-(5-phospho-beta-D-ribosyl)glycinamide-binding positions include aspartate 286, lysine 356, and 363 to 364; that span reads RR.

Belongs to the PurK/PurT family. Homodimer.

It catalyses the reaction N(1)-(5-phospho-beta-D-ribosyl)glycinamide + formate + ATP = N(2)-formyl-N(1)-(5-phospho-beta-D-ribosyl)glycinamide + ADP + phosphate + H(+). Its pathway is purine metabolism; IMP biosynthesis via de novo pathway; N(2)-formyl-N(1)-(5-phospho-D-ribosyl)glycinamide from N(1)-(5-phospho-D-ribosyl)glycinamide (formate route): step 1/1. Functionally, involved in the de novo purine biosynthesis. Catalyzes the transfer of formate to 5-phospho-ribosyl-glycinamide (GAR), producing 5-phospho-ribosyl-N-formylglycinamide (FGAR). Formate is provided by PurU via hydrolysis of 10-formyl-tetrahydrofolate. The sequence is that of Formate-dependent phosphoribosylglycinamide formyltransferase from Pseudomonas putida (strain ATCC 47054 / DSM 6125 / CFBP 8728 / NCIMB 11950 / KT2440).